A 253-amino-acid chain; its full sequence is Phosphoadenosine 5'-phosphosulfate reductase (253 aa).

The active-site Nucleophile; cysteine thiosulfonate intermediate is the Cys239.

This sequence belongs to the PAPS reductase family. CysH subfamily.

Its subcellular location is the cytoplasm. It carries out the reaction [thioredoxin]-disulfide + sulfite + adenosine 3',5'-bisphosphate + 2 H(+) = [thioredoxin]-dithiol + 3'-phosphoadenylyl sulfate. The protein operates within sulfur metabolism; hydrogen sulfide biosynthesis; sulfite from sulfate: step 3/3. Catalyzes the formation of sulfite from phosphoadenosine 5'-phosphosulfate (PAPS) using thioredoxin as an electron donor. In Aliivibrio fischeri (strain MJ11) (Vibrio fischeri), this protein is Phosphoadenosine 5'-phosphosulfate reductase.